The chain runs to 308 residues: Ribosomal RNA large subunit methyltransferase F (308 aa).

This sequence belongs to the methyltransferase superfamily. METTL16/RlmF family.

Its subcellular location is the cytoplasm. The enzyme catalyses adenosine(1618) in 23S rRNA + S-adenosyl-L-methionine = N(6)-methyladenosine(1618) in 23S rRNA + S-adenosyl-L-homocysteine + H(+). Specifically methylates the adenine in position 1618 of 23S rRNA. This chain is Ribosomal RNA large subunit methyltransferase F, found in Shigella boydii serotype 18 (strain CDC 3083-94 / BS512).